A 153-amino-acid polypeptide reads, in one-letter code: Interleukin-4 (153 aa).

Positions 1–24 (MGLTSQLLPPLFFLLACAGNFVHG) are cleaved as a signal peptide. Disulfide bonds link Cys27/Cys151, Cys48/Cys89, and Cys70/Cys123. An N-linked (GlcNAc...) asparagine glycan is attached at Asn62.

It belongs to the IL-4/IL-13 family.

It is found in the secreted. In terms of biological role, participates in at least several B-cell activation processes as well as of other cell types. It is a costimulator of DNA-synthesis. It induces the expression of class II MHC molecules on resting B-cells. It enhances both secretion and cell surface expression of IgE and IgG1. It also regulates the expression of the low affinity Fc receptor for IgE (CD23) on both lymphocytes and monocytes. Positively regulates IL31RA expression in macrophages. Stimulates autophagy in dendritic cells by interfering with mTORC1 signaling and through the induction of RUFY4. This chain is Interleukin-4 (IL4), found in Macaca fascicularis (Crab-eating macaque).